Consider the following 365-residue polypeptide: Methionine import ATP-binding protein MetN (365 aa).

An ABC transporter domain is found at 17–256 (IVFEHVTKEF…PQSETTQRFL (240 aa)). Residue 53–60 (GHSGAGKS) coordinates ATP. Residues 346–365 (SNSAAPTTSATVPTPTEEAH) form a disordered region.

It belongs to the ABC transporter superfamily. Methionine importer (TC 3.A.1.24) family. As to quaternary structure, the complex is composed of two ATP-binding proteins (MetN), two transmembrane proteins (MetI) and a solute-binding protein (MetQ).

The protein resides in the cell membrane. The enzyme catalyses L-methionine(out) + ATP + H2O = L-methionine(in) + ADP + phosphate + H(+). It carries out the reaction D-methionine(out) + ATP + H2O = D-methionine(in) + ADP + phosphate + H(+). In terms of biological role, part of the ABC transporter complex MetNIQ involved in methionine import. Responsible for energy coupling to the transport system. This chain is Methionine import ATP-binding protein MetN, found in Cutibacterium acnes (strain DSM 16379 / KPA171202) (Propionibacterium acnes).